The sequence spans 578 residues: Arginine--tRNA ligase (578 aa).

The 'HIGH' region signature appears at 127 to 137 (PNLAKEMHVGH).

This sequence belongs to the class-I aminoacyl-tRNA synthetase family. As to quaternary structure, monomer.

It is found in the cytoplasm. The catalysed reaction is tRNA(Arg) + L-arginine + ATP = L-arginyl-tRNA(Arg) + AMP + diphosphate. This Pseudomonas entomophila (strain L48) protein is Arginine--tRNA ligase.